The chain runs to 388 residues: Zinc finger protein 1 (388 aa).

The segment covering 1-19 (MSSIPNINWNDPNNGKSNT) has biased composition (polar residues). Disordered stretches follow at residues 1–120 (MSSI…QQPL), 157–219 (LQQR…QQWD), and 236–311 (SSIQ…KPIT). Positions 20-38 (SRQSQPQPQLPSNVSPPNS) are enriched in low complexity. Polar residues-rich tracts occupy residues 52-67 (YGSS…NPNT) and 88-97 (YPVQQTAQQR). Low complexity-rich tracts occupy residues 102 to 120 (LQQV…QQPL) and 157 to 172 (LQQR…KSQL). Residues 173–203 (NEQNAMMSASTQQYPVQDFTNPYPNAQNPAE) are compositionally biased toward polar residues. Composition is skewed to low complexity over residues 204 to 217 (QQQQ…QSQQ) and 236 to 259 (SSIQ…KQQQ). The segment covering 268 to 278 (KKKPGRKPKLR) has biased composition (basic residues). Residues 282–294 (ESSSETPQVPKTA) show a composition bias toward polar residues. The zn(2)-C6 fungal-type DNA-binding region spans 318–345 (CLTCRQRKKRCCETRPRCTECTRLRLNC). Positions 348–367 (PKPGTEHKNKPKDQKDDENT) are disordered. Positions 351-367 (GTEHKNKPKDQKDDENT) are enriched in basic and acidic residues.

It is found in the nucleus. Functionally, perhaps a regulatory role. May be involved in transcriptional activation. The sequence is that of Zinc finger protein 1 (CZF1) from Candida albicans (strain WO-1) (Yeast).